A 70-amino-acid polypeptide reads, in one-letter code: NAD(P)H-quinone oxidoreductase subunit O (70 aa).

It belongs to the complex I NdhO subunit family. As to quaternary structure, NDH-1 can be composed of about 15 different subunits; different subcomplexes with different compositions have been identified which probably have different functions.

It is found in the cellular thylakoid membrane. It carries out the reaction a plastoquinone + NADH + (n+1) H(+)(in) = a plastoquinol + NAD(+) + n H(+)(out). The catalysed reaction is a plastoquinone + NADPH + (n+1) H(+)(in) = a plastoquinol + NADP(+) + n H(+)(out). In terms of biological role, NDH-1 shuttles electrons from an unknown electron donor, via FMN and iron-sulfur (Fe-S) centers, to quinones in the respiratory and/or the photosynthetic chain. The immediate electron acceptor for the enzyme in this species is believed to be plastoquinone. Couples the redox reaction to proton translocation, and thus conserves the redox energy in a proton gradient. Cyanobacterial NDH-1 also plays a role in inorganic carbon-concentration. The sequence is that of NAD(P)H-quinone oxidoreductase subunit O from Trichormus variabilis (strain ATCC 29413 / PCC 7937) (Anabaena variabilis).